The chain runs to 168 residues: HTH-type transcriptional regulator IscR (168 aa).

Positions 2–131 constitute an HTH rrf2-type domain; the sequence is KLTSKGRYAV…NNITLGELMS (130 aa). The segment at residues 28–51 is a DNA-binding region (H-T-H motif); that stretch reads LADISERQGISLSYLEQLFSKLRK. Residues cysteine 92, cysteine 98, and cysteine 104 each contribute to the [2Fe-2S] cluster site.

[2Fe-2S] cluster is required as a cofactor.

Functionally, regulates the transcription of several operons and genes involved in the biogenesis of Fe-S clusters and Fe-S-containing proteins. In Vibrio vulnificus (strain CMCP6), this protein is HTH-type transcriptional regulator IscR.